We begin with the raw amino-acid sequence, 229 residues long: MAKQPKRITAWTGDRDAAHSVEAAIALVKANAKAKFDETIEISVNLGVDPRHADQQVRGVVNLPSGTGRDVRVAVFAKDAKAAEATAAGAEHVGADDLYEKIAGGFMDFDRVIATPDMMALVGRLGKVLGPRGLMPNPKVGTVTPNVAQAVKDAKGGAVEFRVEKAGIVHAGIGKASFTDEALAINVKALIEALNRSKPSGAKGVFIKRVGLSSTMGPGFKVDISSIGA.

Belongs to the universal ribosomal protein uL1 family. In terms of assembly, part of the 50S ribosomal subunit.

Functionally, binds directly to 23S rRNA. The L1 stalk is quite mobile in the ribosome, and is involved in E site tRNA release. In terms of biological role, protein L1 is also a translational repressor protein, it controls the translation of the L11 operon by binding to its mRNA. The polypeptide is Large ribosomal subunit protein uL1 (Caulobacter vibrioides (strain ATCC 19089 / CIP 103742 / CB 15) (Caulobacter crescentus)).